The chain runs to 491 residues: Subtilase-type proteinase RRT12 (491 aa).

A signal peptide spans 1–17 (MKPQCILISLLVNLAYA). N-linked (GlcNAc...) asparagine glycans are attached at residues asparagine 38, asparagine 64, asparagine 106, and asparagine 121. Residues 142–442 (PFDVGDKDRY…FPRLNIEAIA (301 aa)) enclose the Peptidase S8 domain. Residues aspartate 174 and histidine 205 each act as charge relay system in the active site. N-linked (GlcNAc...) asparagine glycans are attached at residues asparagine 268 and asparagine 356. The active-site Charge relay system is serine 365. Asparagine 449 carries an N-linked (GlcNAc...) asparagine glycan.

Belongs to the peptidase S8 family. N-glycosylated.

It localises to the spore wall. Subtilisin-related protease involved in the formation of a protective dityrosine layer required for spore wall assembly. Identified in a screen for mutants with increased levels of rDNA transcription. The chain is Subtilase-type proteinase RRT12 (RRT12) from Saccharomyces cerevisiae (strain ATCC 204508 / S288c) (Baker's yeast).